A 237-amino-acid chain; its full sequence is B3 domain-containing protein At1g20600 (237 aa).

The segment at 53-79 is disordered; the sequence is LVSQANQKQSRKREEKTEKNQPKRVKN. Residues 64 to 73 are compositionally biased toward basic and acidic residues; that stretch reads KREEKTEKNQ. The segment at residues 126–230 is a DNA-binding region (TF-B3); sequence KKQLMSSDVD…LEHVFIRGSK (105 aa).

It is found in the nucleus. The chain is B3 domain-containing protein At1g20600 from Arabidopsis thaliana (Mouse-ear cress).